The chain runs to 149 residues: Glutamate mutase sigma subunit (149 aa).

The 134-residue stretch at aspartate 5–aspartate 138 folds into the B12-binding domain. Adenosylcob(III)alamin is bound by residues serine 15–alanine 19, histidine 18, serine 63–leucine 65, and asparagine 94–glycine 98.

It belongs to the methylaspartate mutase GlmS subunit family. Heterotetramer composed of 2 epsilon subunits (GlmE) and 2 sigma subunits (GlmS). GlmE exists as a homodimer and GlmS as a monomer. Adenosylcob(III)alamin is required as a cofactor.

It carries out the reaction (2S,3S)-3-methyl-L-aspartate = L-glutamate. The protein operates within amino-acid degradation; L-glutamate degradation via mesaconate pathway; acetate and pyruvate from L-glutamate: step 1/4. Functionally, catalyzes the carbon skeleton rearrangement of L-glutamate to L-threo-3-methylaspartate ((2S,3S)-3-methylaspartate). The chain is Glutamate mutase sigma subunit from Halobacterium salinarum (strain ATCC 700922 / JCM 11081 / NRC-1) (Halobacterium halobium).